Reading from the N-terminus, the 750-residue chain is GTP pyrophosphokinase rsh (750 aa).

The HD domain maps to 45 to 144; sequence YFSHPLEVAA…VKLADRLHNM (100 aa). Residues 390–451 enclose the TGS domain; it reads DQVFCFTPKG…KNGDEVDIIR (62 aa). A disordered region spans residues 587 to 613; that stretch reads AAKVDPAATTPKPGKRALPIRGTNPDL. One can recognise an ACT domain in the interval 676 to 750; it reads RISVSAINSP…SVSSAKRVNG (75 aa).

The protein belongs to the RelA/SpoT family.

It carries out the reaction GTP + ATP = guanosine 3'-diphosphate 5'-triphosphate + AMP. Functionally, functions as a (p)ppGpp synthase. In eubacteria ppGpp (guanosine 3'-diphosphate 5'-diphosphate) is a mediator of the stringent response that coordinates a variety of cellular activities in response to changes in nutritional abundance. It is necessary for persistence in mice, essential for intracellular growth of Brucella and required for expression of the type IV secretion system VirB and therefore plays a role in adaptation of Brucella to its intracellular host environment. The sequence is that of GTP pyrophosphokinase rsh (rsh) from Brucella melitensis biotype 1 (strain ATCC 23456 / CCUG 17765 / NCTC 10094 / 16M).